The following is a 274-amino-acid chain: Proteasome subunit beta (274 aa).

Positions 1–52 (MADPMGGAGRLPAVFMTPGTSSFTDFLSQSAPHLLPGARGGLPGPVTEVAHG) are cleaved as a propeptide — removed in mature form; by autocatalysis. T53 functions as the Nucleophile in the catalytic mechanism.

The protein belongs to the peptidase T1B family. As to quaternary structure, the 20S proteasome core is composed of 14 alpha and 14 beta subunits that assemble into four stacked heptameric rings, resulting in a barrel-shaped structure. The two inner rings, each composed of seven catalytic beta subunits, are sandwiched by two outer rings, each composed of seven alpha subunits. The catalytic chamber with the active sites is on the inside of the barrel. Has a gated structure, the ends of the cylinder being occluded by the N-termini of the alpha-subunits. Is capped by the proteasome-associated ATPase, ARC.

The protein localises to the cytoplasm. The enzyme catalyses Cleavage of peptide bonds with very broad specificity.. It participates in protein degradation; proteasomal Pup-dependent pathway. Its activity is regulated as follows. The formation of the proteasomal ATPase ARC-20S proteasome complex, likely via the docking of the C-termini of ARC into the intersubunit pockets in the alpha-rings, may trigger opening of the gate for substrate entry. Interconversion between the open-gate and close-gate conformations leads to a dynamic regulation of the 20S proteasome proteolysis activity. Functionally, component of the proteasome core, a large protease complex with broad specificity involved in protein degradation. In Frankia alni (strain DSM 45986 / CECT 9034 / ACN14a), this protein is Proteasome subunit beta.